Reading from the N-terminus, the 80-residue chain is Toxin Acra I-2 (80 aa).

Positions 1 to 22 are cleaved as a signal peptide; it reads MMKLALFSIIVILFSLIGSIHG. The LCN-type CS-alpha/beta domain occupies 25–80; that stretch reads VPGNYPLDSSGNKYPCTVLGDNQSCIDVCKKHGVKYGYCYSFKCWCEFLEDKNVSI. Intrachain disulfides connect Cys-40–Cys-63, Cys-49–Cys-68, and Cys-53–Cys-70.

Expressed by the venom gland.

Its subcellular location is the secreted. In terms of biological role, probable neurotoxin that inhibits ion channels. Is toxic to mice. Is about 2.8% of the total protein in the venom. This Androctonus crassicauda (Arabian fat-tailed scorpion) protein is Toxin Acra I-2.